The sequence spans 465 residues: Putative multidrug resistance protein MdtD (465 aa).

A run of 12 helical transmembrane segments spans residues 12–32, 49–69, 72–92, 138–158, 165–185, 195–215, 219–239, 267–287, 290–310, 329–351, 393–413, and 430–450; these read LWIV…VNTA, SVIV…GWLA, IGVK…SLMC, FVTL…GFLV, WIFL…LLLM, FDIS…LALD, GLGL…IALG, LVGS…TPIF, IGLG…IIGS, VLVN…AIMG, LLSM…GILL, and SAFL…ALIF.

The protein belongs to the major facilitator superfamily. TCR/Tet family.

It localises to the cell inner membrane. The sequence is that of Putative multidrug resistance protein MdtD from Yersinia pseudotuberculosis serotype I (strain IP32953).